The following is a 293-amino-acid chain: 4-hydroxybenzoate octaprenyltransferase (293 aa).

The next 8 membrane-spanning stretches (helical) occupy residues 41–61 (FAAA…LGVI), 98–118 (TEAK…DLLL), 122–142 (TFLL…MKRF), 145–165 (LPQV…YGAV), 167–187 (ESLP…TVAY), 218–238 (IIAL…WISQ), 241–261 (WGYF…CWLT), and 272–292 (AFLN…VGIY).

It belongs to the UbiA prenyltransferase family. Mg(2+) is required as a cofactor.

It localises to the cell inner membrane. It catalyses the reaction all-trans-octaprenyl diphosphate + 4-hydroxybenzoate = 4-hydroxy-3-(all-trans-octaprenyl)benzoate + diphosphate. It functions in the pathway cofactor biosynthesis; ubiquinone biosynthesis. Catalyzes the prenylation of para-hydroxybenzoate (PHB) with an all-trans polyprenyl group. Mediates the second step in the final reaction sequence of ubiquinone-8 (UQ-8) biosynthesis, which is the condensation of the polyisoprenoid side chain with PHB, generating the first membrane-bound Q intermediate 3-octaprenyl-4-hydroxybenzoate. The chain is 4-hydroxybenzoate octaprenyltransferase from Actinobacillus pleuropneumoniae serotype 5b (strain L20).